A 525-amino-acid polypeptide reads, in one-letter code: Mitochondrial-processing peptidase subunit alpha (525 aa).

The N-terminal 33 residues, 1-33, are a transit peptide targeting the mitochondrion; sequence MAAMVLAATRLLRGSGSWGRSRPRFGDPAYRRF. An N6-succinyllysine modification is found at K64. K299 carries the post-translational modification N6-acetyllysine.

This sequence belongs to the peptidase M16 family. As to quaternary structure, heterodimer of PMPCA (alpha) and PMPCB (beta) subunits, forming the mitochondrial processing protease (MPP) in which PMPCA is involved in substrate recognition and binding and PMPCB is the catalytic subunit.

The protein resides in the mitochondrion matrix. It is found in the mitochondrion inner membrane. Its function is as follows. Substrate recognition and binding subunit of the essential mitochondrial processing protease (MPP), which cleaves the mitochondrial sequence off newly imported precursors proteins. This Bos taurus (Bovine) protein is Mitochondrial-processing peptidase subunit alpha (PMPCA).